Reading from the N-terminus, the 410-residue chain is F-box protein At3g61340 (410 aa).

Residues 17–66 (EEKSERIPFDLVIEILLRLPVKSIARFRYVSKLWQSTLRGQHFTESYLTI) form the F-box domain.

The sequence is that of F-box protein At3g61340 from Arabidopsis thaliana (Mouse-ear cress).